A 167-amino-acid polypeptide reads, in one-letter code: NAD(P)H-quinone oxidoreductase subunit I, chloroplastic (167 aa).

2 consecutive 4Fe-4S ferredoxin-type domains span residues 55 to 84 (GRIHFEFDKCIACEVCVRVCPIDLPVVDWK) and 95 to 124 (LNYSIDFGICIFCGNCVEYCPTNCLSMTEE). Residues cysteine 64, cysteine 67, cysteine 70, cysteine 74, cysteine 104, cysteine 107, cysteine 110, and cysteine 114 each contribute to the [4Fe-4S] cluster site.

It belongs to the complex I 23 kDa subunit family. NDH is composed of at least 16 different subunits, 5 of which are encoded in the nucleus. [4Fe-4S] cluster is required as a cofactor.

It localises to the plastid. The protein localises to the chloroplast thylakoid membrane. The enzyme catalyses a plastoquinone + NADH + (n+1) H(+)(in) = a plastoquinol + NAD(+) + n H(+)(out). It catalyses the reaction a plastoquinone + NADPH + (n+1) H(+)(in) = a plastoquinol + NADP(+) + n H(+)(out). In terms of biological role, NDH shuttles electrons from NAD(P)H:plastoquinone, via FMN and iron-sulfur (Fe-S) centers, to quinones in the photosynthetic chain and possibly in a chloroplast respiratory chain. The immediate electron acceptor for the enzyme in this species is believed to be plastoquinone. Couples the redox reaction to proton translocation, and thus conserves the redox energy in a proton gradient. The protein is NAD(P)H-quinone oxidoreductase subunit I, chloroplastic of Pelargonium hortorum (Common geranium).